The chain runs to 154 residues: Cold shock domain-containing protein C2 (154 aa).

Disordered stretches follow at residues 1 to 22 and 36 to 62; these read MTSE…SPVW and ERGG…SATA. Ser-19 carries the phosphoserine modification. A CSD domain is found at 69 to 136; that stretch reads VFKGVCKQFS…KFQAVEVVLT (68 aa).

In terms of tissue distribution, brain-specific. Expression restricted to the pyramidal neurons of the cerebral cortex and in the Purkinje cells of the cerebellum.

The protein localises to the nucleus. It is found in the cytoplasm. RNA-binding factor which binds specifically to the very 3'-UTR ends of both histone H1 and H3.3 mRNAs, encompassing the polyadenylation signal. Might play a central role in the negative regulation of histone variant synthesis in the developing brain. The protein is Cold shock domain-containing protein C2 (Csdc2) of Rattus norvegicus (Rat).